Reading from the N-terminus, the 436-residue chain is Acrosin (436 aa).

The signal sequence occupies residues 1-19 (MVEMLPTVAVLVLAVSVVA). N22 carries N-linked (GlcNAc...) asparagine glycosylation. 6 cysteine pairs are disulfide-bonded: C25-C155, C29-C163, C74-C90, C178-C247, C210-C226, and C237-C267. Residues 43–291 (IVSGQSAQLG…YLDWIASKIG (249 aa)) enclose the Peptidase S1 domain. Residues H89 and D143 each act as charge relay system in the active site. A glycan (N-linked (GlcNAc...) asparagine) is linked at N211. The active-site Charge relay system is the S241. Residues 346–436 (PSSTQTSSSL…NKPSEPFLHS (91 aa)) constitute a propeptide, pro-rich.

The protein belongs to the peptidase S1 family. Heavy chain (catalytic) and a light chain linked by two disulfide bonds. Forms a heterodimer with SERPINA5.

The catalysed reaction is Preferential cleavage: Arg-|-Xaa, Lys-|-Xaa.. Inhibited by SERPINA5. Functionally, acrosin is the major protease of mammalian spermatozoa. It is a serine protease of trypsin-like cleavage specificity, it is synthesized in a zymogen form, proacrosin and stored in the acrosome. The sequence is that of Acrosin (Acr) from Mus musculus (Mouse).